A 161-amino-acid polypeptide reads, in one-letter code: Cell division control protein 31 (161 aa).

EF-hand domains are found at residues 20–55 (EQKQ…LGFE), 56–91 (LPKR…KILK), 93–128 (DPLD…LGET), and 129–161 (LTDE…CTDS). 4 residues coordinate Ca(2+): Asp33, Asn35, Asp37, and Glu44. At Thr130 the chain carries Phosphothreonine. Residues Asp142, Asp144, Asp146, Glu148, and Glu153 each contribute to the Ca(2+) site.

Belongs to the centrin family. In terms of assembly, component of the spindle pole body (SPB), acting as the connector of microtubule arrays in the cytoplasm and the nucleoplasm, is involved in nuclear positioning before chromosome segregation, SPB separation, spindle formation, chromosome segregation, nuclear migration into the bud, nuclear reorientation after cytokinesis and nuclear fusion during conjugation. The SPB half-bridge, which is tightly associated with the cytoplasmic side of the nuclear envelope and the SPB, is playing a key role as the starting structure for and in the initiation of SPB duplication in G1. At the SPB half-bridge CDC31 interacts with KAR1, MPS3 and SFI1. Interacts with KIC1. Interacts with VPS13. Associates with nuclear pore complexes (NPCs).

It localises to the nucleus envelope. It is found in the cytoplasm. The protein localises to the cytoskeleton. The protein resides in the microtubule organizing center. Its subcellular location is the spindle pole body. In terms of biological role, functions as a component of the spindle pole body (SPB) half-bridge. At the SPB, it is recruited by KAR1 and MPS3 to the SPB half-bridge and involved in the initial steps of SPB duplication. Also involved in connection with the protein kinase KIC1 in the maintenance of cell morphology and integrity. May play a role in vesicle-mediated transport, in a VPS13-dependent manner. This chain is Cell division control protein 31 (CDC31), found in Saccharomyces cerevisiae (strain ATCC 204508 / S288c) (Baker's yeast).